The primary structure comprises 760 residues: Armadillo-like helical domain-containing protein 4 (760 aa).

A signal peptide spans 1 to 27 (MSRPIVLHICLAFCSLLLLNFAAQCLA). Residues 28-700 (FPNLERREIV…KDKAGYMSGM (673 aa)) lie on the Extracellular side of the membrane. Disordered regions lie at residues 49 to 69 (LNTD…SGDP), 117 to 143 (GEEV…LTNP), 216 to 243 (RTEK…TEPS), 373 to 392 (HGGE…PMGD), 474 to 495 (TRGE…DAPR), and 536 to 652 (NEEL…SQEP). Asparagine 56 carries N-linked (GlcNAc...) asparagine glycosylation. A compositionally biased stretch (basic and acidic residues) spans 216 to 228 (RTEKFEANPEHKT). A compositionally biased stretch (polar residues) spans 380–390 (DQSSVTPTSPM). Basic and acidic residues predominate over residues 474-484 (TRGEDETKGGR). Residues 594-635 (LESEEGEDDEDEEDEEEEDEEEEDEEEDEEDKDADSLDEALG) are compositionally biased toward acidic residues. The chain crosses the membrane as a helical span at residues 701 to 721 (LVPVGVGIAGALFILGALYSI). The Cytoplasmic portion of the chain corresponds to 722–760 (KVMNRRRRNGFKRHKRKQREFNSMQDRVMLLADSSEDEF). Serine 755 and serine 756 each carry phosphoserine.

As to quaternary structure, interacts with IL6ST; this interaction prevents IL6ST protein homodimerization and bridges ARMH4 with IL6R and STAT3 and therefore inhibits phosphorylation of STAT3 at 'Tyr-705'. Interacts (via cytoplasmic tail) with RICTOR; this interaction bridges ARMH4 to the mTORC2 complex and inhibits the mTORC2 kinase activity.

Its subcellular location is the membrane. May modulate immune response and may play a role in inflammation. Down-modulates STAT3 signaling throught direct interaction with IL6ST, resulting in the inhibition of phosphorylation of STAT3 at Tyr-705. May negatively regulates AKT signaling by modulating the activity of mTORC2 complex through RICTOR interaction. This chain is Armadillo-like helical domain-containing protein 4, found in Bos taurus (Bovine).